We begin with the raw amino-acid sequence, 518 residues long: Motile sperm domain-containing protein 2 (518 aa).

Topologically, residues 1-496 are cytoplasmic; that stretch reads MAENNAQNKA…QLQRSIWFQQ (496 aa). The CRAL-TRIO domain maps to 85 to 239; that stretch reads IPRWLLELGG…HMGGTDPFKY (155 aa). Residues 252–312 are disordered; sequence PLCENGPIAS…KDENEKVDSK (61 aa). Composition is skewed to basic and acidic residues over residues 265-279 and 300-312; these read TSSK…KETL and VSKK…VDSK. The MSP domain occupies 327-445; that stretch reads LLHISPAEEL…MEHRLRCHTV (119 aa). Positions 365 to 366 are required for FFAT motif binding and phosphorylated FFAT motif binding; it reads RT. A helical; Anchor for type IV membrane protein transmembrane segment spans residues 497 to 518; the sequence is LLLALTMVLLDFVVSFFYSLYN.

Homooligomer. Interacts (via MSP domain) with STARD3NL (via FFAT motif), RMDN3 (via FFAT motif), OSBPL1A (via FFAT motif) and CERT1 (via FFAT motif). Interacts (via MSP domain) with STARD3 (via phosphorylated FFAT motif); this interaction depends on the critical phosphorylation of STARD3 on 'Ser-209'. Interacts with RB1CC1 (via phosphorylated FFAT motif), MIGA2 (via phosphorylated FFAT motif) and OSBPL1A (via FFAT motif).

It localises to the endoplasmic reticulum membrane. Its function is as follows. Endoplasmic reticulum-anchored protein that mediates the formation of contact sites between the endoplasmic (ER) and endosomes, mitochondria or Golgi through interaction with conventional- and phosphorylated-FFAT-containing organelle-bound proteins. In addition, forms endoplasmic reticulum (ER)-lipid droplets (LDs) contacts through a direct protein-membrane interaction and participates in LDs homeostasis. The attachment mechanism involves an amphipathic helix that has an affinity for lipid packing defects present at the surface of LDs. Promotes migration of primary monocytes and neutrophils, in response to various chemokines. This chain is Motile sperm domain-containing protein 2, found in Mus musculus (Mouse).